Here is a 224-residue protein sequence, read N- to C-terminus: Menaquinol:cytochrome c reductase cytochrome b subunit (224 aa).

A helical transmembrane segment spans residues 37 to 57; it reads FSAFVYCFGGLTFFVTVIQVL. Heme b is bound at residue Y42. Heme c is bound at residue C43. Residues R91, H94, H108, and R111 each contribute to the heme b site. A run of 3 helical transmembrane segments spans residues 96-116, 126-146, and 195-215; these read WGAS…FFQG, WIVG…GYLL, and IHVF…FIMI. H196 and H211 together coordinate heme b. Heme c contacts are provided by R216 and I220. A heme b-binding site is contributed by S221.

The protein belongs to the cytochrome b family. In terms of assembly, the main subunits of the menaquinol:cytochrome c complex are a Rieske-type iron-sulfur protein (QcrA), a cytochrome b (QcrB) and a cytochrome c (QcrC). The cofactor is heme b. Heme c serves as cofactor.

The protein resides in the cell membrane. Its function is as follows. Component of the menaquinol:cytochrome c reductase complex. The chain is Menaquinol:cytochrome c reductase cytochrome b subunit from Bacillus subtilis (strain 168).